Reading from the N-terminus, the 510-residue chain is MTTSIIERIDAWAEKTPDFPCYEYAGTRLSYKELKRQSDAFGSFLLKNLITDKEKPIIVYGHMSPLMLVAFLGSIKSGRAYVPVDVSMPVERIEQIKKAADPSMFICTEELPNNLTITGCPVLTQDQLMDALEKHFGEVPDKEACVNNDDNYYIIYTSGSTGNPKGVQISQNNLVSFSNWILQDFSLSQGLRFLNQAPFSFDLSVMDLYPSLLSGGTLVPLDKTITANMKDLYREIPAQNLDVWVSTPSFADLCLLDENFNQENNPRLTRFLFCGEVLAKKTASELLDRFPDAVIYNTYGPTEATVAVTQVKVTREIIDAYPSLPLGVIKPDMRLHIVDQETGEVLPEGEKGEIVLIGASVSKGYLNEPEKTDQVFFDYKGYQAYRTGDSGIIKDGYLFFQGRLDFQIKLHGYRIELEDIENNLKKVSYIQNCAIIPKMKDEKVDMLVAQVIPTTHDFEKEYQLSAAIKKELKEFMPAYMIPRKWIYKTDFPLTMNGKIDRKSLNSEVNK.

157-158 provides a ligand contact to ATP; the sequence is TS. D202 serves as a coordination point for D-alanine. 297–302 provides a ligand contact to ATP; sequence NTYGPT. Residue V306 participates in D-alanine binding. ATP-binding residues include D389 and K498. K498 provides a ligand contact to D-alanine.

Belongs to the ATP-dependent AMP-binding enzyme family. DltA subfamily.

The protein localises to the cytoplasm. It carries out the reaction holo-[D-alanyl-carrier protein] + D-alanine + ATP = D-alanyl-[D-alanyl-carrier protein] + AMP + diphosphate. The protein operates within cell wall biogenesis; lipoteichoic acid biosynthesis. Functionally, catalyzes the first step in the D-alanylation of lipoteichoic acid (LTA), the activation of D-alanine and its transfer onto the D-alanyl carrier protein (Dcp) DltC. In an ATP-dependent two-step reaction, forms a high energy D-alanyl-AMP intermediate, followed by transfer of the D-alanyl residue as a thiol ester to the phosphopantheinyl prosthetic group of the Dcp. D-alanylation of LTA plays an important role in modulating the properties of the cell wall in Gram-positive bacteria, influencing the net charge of the cell wall. The sequence is that of D-alanine--D-alanyl carrier protein ligase from Listeria monocytogenes serovar 1/2a (strain ATCC BAA-679 / EGD-e).